A 1382-amino-acid chain; its full sequence is DNA-directed RNA polymerase subunit beta' (1382 aa).

Residues Cys-70, Cys-72, Cys-85, and Cys-88 each contribute to the Zn(2+) site. Mg(2+) is bound by residues Asp-460, Asp-462, and Asp-464. Cys-808, Cys-882, Cys-889, and Cys-892 together coordinate Zn(2+).

This sequence belongs to the RNA polymerase beta' chain family. As to quaternary structure, the RNAP catalytic core consists of 2 alpha, 1 beta, 1 beta' and 1 omega subunit. When a sigma factor is associated with the core the holoenzyme is formed, which can initiate transcription. Mg(2+) is required as a cofactor. Zn(2+) serves as cofactor.

The catalysed reaction is RNA(n) + a ribonucleoside 5'-triphosphate = RNA(n+1) + diphosphate. In terms of biological role, DNA-dependent RNA polymerase catalyzes the transcription of DNA into RNA using the four ribonucleoside triphosphates as substrates. This chain is DNA-directed RNA polymerase subunit beta', found in Geobacter sp. (strain M21).